The primary structure comprises 332 residues: Formamidase (332 aa).

Positions 14-259 (FLTALIQYPV…WEIVTAEVYP (246 aa)) constitute a CN hydrolase domain. Glutamate 60 acts as the Proton acceptor in catalysis. Catalysis depends on lysine 132, which acts as the Proton donor. The active-site Nucleophile is the cysteine 165.

Belongs to the carbon-nitrogen hydrolase superfamily. Aliphatic amidase family.

It carries out the reaction formamide + H2O = formate + NH4(+). Is an aliphatic amidase with a restricted substrate specificity, as it only hydrolyzes formamide. The polypeptide is Formamidase (Bacillus cereus (strain G9842)).